Here is an 809-residue protein sequence, read N- to C-terminus: Interleukin-4 receptor subunit alpha (809 aa).

The N-terminal stretch at 1-25 is a signal peptide; it reads MGCLCPGLTLPVSCLILVWAAGSGS. Residues 26-231 are Extracellular-facing; it reads VKVLRLTACF…NYYEQPLEQR (206 aa). Residues cysteine 34 and cysteine 44 are joined by a disulfide bond. N-linked (GlcNAc...) asparagine glycans are attached at residues asparagine 53 and asparagine 71. The cysteines at positions 74 and 86 are disulfide-linked. Asparagine 112, asparagine 128, and asparagine 161 each carry an N-linked (GlcNAc...) asparagine glycan. The Fibronectin type-III domain maps to 125 to 222; that stretch reads APQNLTVHAI…EWSPSTTWHN (98 aa). Serine 163 is subject to Phosphoserine. Residues asparagine 175 and asparagine 208 are each glycosylated (N-linked (GlcNAc...) asparagine). The short motif at 211 to 215 is the WSXWS motif element; sequence WSEWS. A helical transmembrane segment spans residues 232 to 255; it reads LPLGVSISCVVILAICLSCYFSII. The Cytoplasmic segment spans residues 256–809; sequence KIKKEWWDQI…STGPTCTSAS (554 aa). The Box 1 motif signature appears at 261–269; that stretch reads WWDQIPNPA. Disordered stretches follow at residues 369–397 and 441–468; these read ESEE…QEGR and SAGP…TLTQ. Over residues 447 to 468 the composition is skewed to polar residues; that stretch reads AASQGEEQPLNPESNPLATLTQ. Tyrosine 488 carries the phosphotyrosine modification. Residues 514–536 are disordered; sequence LGQVDPSIPSAPQPSEPPTALQP. A phosphotyrosine mark is found at tyrosine 566, tyrosine 590, and tyrosine 618. Residues 606–674 are disordered; sequence QSGVEASSGE…EPTVKGEDPR (69 aa). The ITIM motif signature appears at 695–700; that stretch reads IVYSAL.

It belongs to the type I cytokine receptor family. Type 4 subfamily. The functional IL4 receptor is formed by initial binding of IL4 to IL4R. Subsequent recruitment to the complex of the common gamma chain, in immune cells, creates a type I receptor and, in non-immune cells, of IL13RA1 forms a type II receptor. IL4R can also interact with the IL13/IL13RA1 complex to form a similar type II receptor. Interacts with PIK3C3. Interacts with the SH2-containing phosphatases, PTPN6/SHIP1, PTPN11/SHIP2 and INPP5D/SHIP. Interacts with JAK1 through a Box 1-containing region; inhibited by SOCS5. Interacts with SOCS5; inhibits IL4 signaling. Interacts with JAK3. Interacts with CLM1. Interacts with IL13RA2. In terms of processing, on IL4 binding, phosphorylated on tyrosine residues in the cytoplasmic domain.

The protein localises to the cell membrane. It is found in the secreted. Receptor for both interleukin 4 and interleukin 13. Couples to the JAK1/2/3-STAT6 pathway. The IL4 response is involved in promoting Th2 differentiation. The IL4/IL13 responses are involved in regulating IgE production and, chemokine and mucus production at sites of allergic inflammation. In certain cell types, can signal through activation of insulin receptor substrates, IRS1/IRS2. The polypeptide is Interleukin-4 receptor subunit alpha (IL4R) (Equus caballus (Horse)).